The primary structure comprises 386 residues: Protein-glutamate methylesterase/protein-glutamine glutaminase 3 (386 aa).

A Response regulatory domain is found at 4–121; sequence KVLVVDDSGF…SRNPQKVKQL (118 aa). At Asp55 the chain carries 4-aspartylphosphate. Residues 132–194 show a composition bias toward low complexity; sequence SNRRSSGFGS…SHAPAHPTTS (63 aa). The interval 132–197 is disordered; sequence SNRRSSGFGS…PAHPTTSGTA (66 aa). The CheB-type methylesterase domain maps to 191–383; it reads PTTSGTAKRK…LDDIGRHLVE (193 aa). Catalysis depends on residues Ser210, His237, and Asp330.

The protein belongs to the CheB family. Post-translationally, phosphorylated by CheA. Phosphorylation of the N-terminal regulatory domain activates the methylesterase activity.

The protein resides in the cytoplasm. It catalyses the reaction [protein]-L-glutamate 5-O-methyl ester + H2O = L-glutamyl-[protein] + methanol + H(+). It carries out the reaction L-glutaminyl-[protein] + H2O = L-glutamyl-[protein] + NH4(+). Functionally, involved in chemotaxis. Part of a chemotaxis signal transduction system that modulates chemotaxis in response to various stimuli. Catalyzes the demethylation of specific methylglutamate residues introduced into the chemoreceptors (methyl-accepting chemotaxis proteins or MCP) by CheR. Also mediates the irreversible deamidation of specific glutamine residues to glutamic acid. The polypeptide is Protein-glutamate methylesterase/protein-glutamine glutaminase 3 (Pseudomonas syringae pv. syringae (strain B728a)).